Reading from the N-terminus, the 305-residue chain is Nucleotide-binding protein Mpe_A3336 (305 aa).

Position 22-29 (22-29 (GISGSGKS)) interacts with ATP. 74–77 (DVRS) contributes to the GTP binding site.

This sequence belongs to the RapZ-like family.

In terms of biological role, displays ATPase and GTPase activities. The sequence is that of Nucleotide-binding protein Mpe_A3336 from Methylibium petroleiphilum (strain ATCC BAA-1232 / LMG 22953 / PM1).